Reading from the N-terminus, the 196-residue chain is Adenylate kinase (196 aa).

Residue Gly9–Thr17 participates in ATP binding.

Belongs to the archaeal adenylate kinase family.

The protein resides in the cytoplasm. The enzyme catalyses AMP + ATP = 2 ADP. The chain is Adenylate kinase from Thermococcus onnurineus (strain NA1).